Here is a 253-residue protein sequence, read N- to C-terminus: Phosphate import ATP-binding protein PstB (253 aa).

Residues 5 to 248 (IQVRDLNAYY…PSDKRTEDYI (244 aa)) enclose the ABC transporter domain. 37–44 (GPSGCGKS) lines the ATP pocket.

It belongs to the ABC transporter superfamily. Phosphate importer (TC 3.A.1.7) family. The complex is composed of two ATP-binding proteins (PstB), two transmembrane proteins (PstC and PstA) and a solute-binding protein (PstS).

It is found in the cell inner membrane. The catalysed reaction is phosphate(out) + ATP + H2O = ADP + 2 phosphate(in) + H(+). In terms of biological role, part of the ABC transporter complex PstSACB involved in phosphate import. Responsible for energy coupling to the transport system. The sequence is that of Phosphate import ATP-binding protein PstB from Koribacter versatilis (strain Ellin345).